We begin with the raw amino-acid sequence, 284 residues long: Homeobox protein six1 (284 aa).

Residues 124-183 constitute a DNA-binding region (homeobox); it reads GEETSYCFKEKSRGVLREWYAHNPYPSPREKRELAEATGLTTTQVSNWFKNRRQRDRAAE. Residues 168–230 are disordered; it reads VSNWFKNRRQ…SPPQSPDQNS (63 aa). The segment covering 179-190 has biased composition (basic and acidic residues); the sequence is DRAAEAKERENT. The span at 191 to 202 shows a compositional bias: low complexity; sequence ENNNTSTNKQNQ.

Belongs to the SIX/Sine oculis homeobox family.

The protein localises to the nucleus. The protein resides in the cytoplasm. Its function is as follows. Transcription factor that is involved in the regulation of cell proliferation, apoptosis and embryonic development. Depending on context, functions as a transcriptional repressor or activator. Required for the normal formation of pre-placodal ectoderm. The sequence is that of Homeobox protein six1 (six1) from Xenopus laevis (African clawed frog).